The chain runs to 343 residues: Phosphoribosylformylglycinamidine cyclo-ligase (343 aa).

This sequence belongs to the AIR synthase family.

Its subcellular location is the cytoplasm. It catalyses the reaction 2-formamido-N(1)-(5-O-phospho-beta-D-ribosyl)acetamidine + ATP = 5-amino-1-(5-phospho-beta-D-ribosyl)imidazole + ADP + phosphate + H(+). It functions in the pathway purine metabolism; IMP biosynthesis via de novo pathway; 5-amino-1-(5-phospho-D-ribosyl)imidazole from N(2)-formyl-N(1)-(5-phospho-D-ribosyl)glycinamide: step 2/2. The polypeptide is Phosphoribosylformylglycinamidine cyclo-ligase (Thermodesulfovibrio yellowstonii (strain ATCC 51303 / DSM 11347 / YP87)).